Here is a 933-residue protein sequence, read N- to C-terminus: Dual 3',5'-cyclic-AMP and -GMP phosphodiesterase 11A (933 aa).

Residues 42–121 (HTSGQGASSL…LQRRASQKEL (80 aa)) are disordered. Phosphoserine occurs at positions 162, 163, and 239. 2 consecutive GAF domains span residues 217–370 (DLTS…GIAI) and 402–558 (DLEK…GLGI). Ser424 contacts 3',5'-cyclic GMP. Residues 588–912 (SKAEVDKFKA…RKWEELHQKR (325 aa)) enclose the PDEase domain. The active-site Proton donor is His664. Positions 668, 704, 705, and 816 each coordinate a divalent metal cation. Residues 913 to 933 (LQVSAASPDPASPMVAGEDRL) are disordered.

It belongs to the cyclic nucleotide phosphodiesterase family. A divalent metal cation serves as cofactor. As to expression, expressed in testis and developing spermatoza.

The protein resides in the cytoplasm. The protein localises to the cytosol. The catalysed reaction is 3',5'-cyclic GMP + H2O = GMP + H(+). It carries out the reaction 3',5'-cyclic AMP + H2O = AMP + H(+). With respect to regulation, inhibited by 3-isobutyl-1-methylxanthine (IBMX), zaprinast and dipyridamole. cGMP acts as an allosteric activator. Plays a role in signal transduction by regulating the intracellular concentration of cyclic nucleotides cAMP and cGMP. Catalyzes the hydrolysis of both cAMP and cGMP to 5'-AMP and 5'-GMP, respectively. The chain is Dual 3',5'-cyclic-AMP and -GMP phosphodiesterase 11A (Pde11a) from Mus musculus (Mouse).